The primary structure comprises 934 residues: MLKLLLGDPNARKLKRYQPIVSDIQLLEEEIAPLSDDELRGRTAAFQERLANAGSLANQRPILDEILPEAFAVVREAGKRVLGMRHFDVQLIGGMVLHEGQIAEMKTGEGKTLVATLPSYLNALTGRGVHVVTVNDYLARRDAEWMGQVHRFLGLSVGLIQQDMRPEERRRNYNCDITYATNSELGFDYLRDNMAADISEVVQREFQYCVIDEVDSILIDEARTPLIISGQVERPQEKYQQAAEVANALARAAELSKDGIDPEGDYEVDEKQRSCTLTDEGFAKAEQMLGVADLFNPQDPWAHYITNALKAKELFVKDVNYIVRDGEAVIVDEFTGRVMPGRRWSDGQHQAIEAKEALAIQSETQTLASITYQNFFLLYPRLAGMTGTAKTEEVEFEKTYKLETTIVPTNRVRARQDWADQVYKTEAAKWRAVANETAEIHKNGRPVLVGTTSVEKSELLSSLLAEQEIPHNLLNAKPENVERESEIVAQAGRAGAVTIATNMAGRGTDIILGGNSDYMARLKLREVLLGRLVKPEEDHTPPVPLQRSAPGGFSDAAAPSLPRSGESLYPCPLTDDTDQALGQLARDLVKAWGDRALTVIELEERIATAAEKAPTEAPQIQALREAIARVKGEYDAVVKQEESRVREAGGLHVIGTERHESRRVDNQLRGRAGRQGDPGSTRFFLSLGDNLLRIFGGDRVAGLMNAFRVEEDMPIESGMLTRSLEGAQKKVETYYYDIRKQVFEYDEVMNNQRRAVYSERRRVLDGRALKKQVIGYGERTMGEIVEAYVNPDLPPEEWDLDQLVGKVKEFIYLLEDLTPDQVQGLGMEELKAFLQEQLRNAYDLKEGQIEQQRPGLMREAERFFILQQIDTLWREHLQAMDALRESVGLRGYGQKDPLIEYKNEGYDMFLEMMTNMRRNVIYSMFMFQPQAPKN.

Residues Q90, 108–112 (GEGKT), and D509 contribute to the ATP site. The disordered stretch occupies residues 535 to 565 (PEEDHTPPVPLQRSAPGGFSDAAAPSLPRSG).

This sequence belongs to the SecA family. Monomer and homodimer. Part of the essential Sec protein translocation apparatus which comprises SecA, SecYEG and auxiliary proteins SecDF. Other proteins may also be involved.

The protein localises to the cell inner membrane. It localises to the cellular thylakoid membrane. The protein resides in the cytoplasm. The catalysed reaction is ATP + H2O + cellular proteinSide 1 = ADP + phosphate + cellular proteinSide 2.. Its function is as follows. Part of the Sec protein translocase complex. Interacts with the SecYEG preprotein conducting channel. Has a central role in coupling the hydrolysis of ATP to the transfer of proteins into and across the cell membrane, serving as an ATP-driven molecular motor driving the stepwise translocation of polypeptide chains across the membrane. In terms of biological role, probably participates in protein translocation into and across both the cytoplasmic and thylakoid membranes in cyanobacterial cells. The sequence is that of Protein translocase subunit SecA from Synechococcus sp. (strain CC9605).